Reading from the N-terminus, the 152-residue chain is MSNKVHVGNIEMEEGLSKTKWMVLEPSEKIKKIPKRLWSVGKEDPRRVIHAFKVGHSLTLVSLLYFMENLFKGIGSNAIWAVMTVVAVLLEFFAVEGLTISEKVILSMAARGRESAAEPHERNEAGNVCHSIKFLPKSIARAKQHHVLNQPY.

A run of 2 helical transmembrane segments spans residues 48 to 68 (VIHA…YFME) and 78 to 98 (AIWA…VEGL).

The protein belongs to the aromatic acid exporter (TC 2.A.85) family.

It is found in the membrane. In terms of biological role, malate transporter. This chain is Putative aluminum-activated malate transporter 11 (ALMT11), found in Arabidopsis thaliana (Mouse-ear cress).